The sequence spans 1475 residues: Mediator of RNA polymerase II transcription subunit 1 (1475 aa).

The span at 1 to 10 (MSGSNAKSSG) shows a compositional bias: polar residues. Disordered stretches follow at residues 1 to 26 (MSGS…KNKQ), 616 to 644 (ETDP…KTSD), 709 to 992 (GVTA…VASG), 1135 to 1166 (QPQP…AGAS), 1184 to 1245 (NKTG…SKKA), 1263 to 1354 (KANS…RFDH), and 1387 to 1475 (PKLS…LAGE). Composition is skewed to low complexity over residues 621-641 (SGSS…GSAK), 711-729 (TASS…ITGK), and 738-782 (KSTA…SGSS). Residues Ser830, Ser834, Ser854, and Ser858 each carry the phosphoserine modification. 2 stretches are compositionally biased toward polar residues: residues 860-874 (VYSS…NSPK) and 888-897 (GKPSMSTLKS). A compositionally biased stretch (low complexity) spans 919 to 934 (TSSGPSASSGSSGATG). A compositionally biased stretch (pro residues) spans 944–953 (APPPPPPIPP). 5 stretches are compositionally biased toward low complexity: residues 954-966 (LASS…SSQS), 973-989 (SSAS…TAGV), 1143-1159 (TSSC…SAGS), 1185-1225 (KTGS…TGST), and 1265-1276 (NSSGNLSSKLSG). Residues 1286 to 1296 (TKSNSTNSFQE) are compositionally biased toward polar residues. 2 stretches are compositionally biased toward low complexity: residues 1334–1346 (SGSV…GSMS) and 1399–1409 (TSGRSTPSGSS). Composition is skewed to polar residues over residues 1415-1430 (GTSS…STGL) and 1442-1458 (SQSG…TAGT).

This sequence belongs to the Mediator complex subunit 1 family. Component of the Mediator complex.

The protein localises to the nucleus. Its function is as follows. Component of the Mediator complex, a coactivator involved in the regulated transcription of nearly all RNA polymerase II-dependent genes. Mediator functions as a bridge to convey information from gene-specific regulatory proteins to the basal RNA polymerase II transcription machinery. Mediator is recruited to promoters by direct interactions with regulatory proteins and serves as a scaffold for the assembly of a functional preinitiation complex with RNA polymerase II and the general transcription factors. Required for activated transcription of the MtnA, MtnB and MtnD genes. The protein is Mediator of RNA polymerase II transcription subunit 1 (MED1) of Drosophila melanogaster (Fruit fly).